We begin with the raw amino-acid sequence, 67 residues long: DNA-directed RNA polymerase subunit omega (67 aa).

The protein belongs to the RNA polymerase subunit omega family. The RNAP catalytic core consists of 2 alpha, 1 beta, 1 beta' and 1 omega subunit. When a sigma factor is associated with the core the holoenzyme is formed, which can initiate transcription.

It catalyses the reaction RNA(n) + a ribonucleoside 5'-triphosphate = RNA(n+1) + diphosphate. Promotes RNA polymerase assembly. Latches the N- and C-terminal regions of the beta' subunit thereby facilitating its interaction with the beta and alpha subunits. The sequence is that of DNA-directed RNA polymerase subunit omega (rpoZ) from Treponema pallidum (strain Nichols).